We begin with the raw amino-acid sequence, 125 residues long: Large ribosomal subunit protein bL20 (125 aa).

The protein belongs to the bacterial ribosomal protein bL20 family.

Binds directly to 23S ribosomal RNA and is necessary for the in vitro assembly process of the 50S ribosomal subunit. It is not involved in the protein synthesizing functions of that subunit. This chain is Large ribosomal subunit protein bL20, found in Methylobacterium sp. (strain 4-46).